Consider the following 279-residue polypeptide: Probable endonuclease 4 (279 aa).

Residues H69, H109, E145, D179, H182, H216, D229, H231, and E261 each coordinate Zn(2+).

This sequence belongs to the AP endonuclease 2 family. Zn(2+) is required as a cofactor.

The catalysed reaction is Endonucleolytic cleavage to 5'-phosphooligonucleotide end-products.. In terms of biological role, endonuclease IV plays a role in DNA repair. It cleaves phosphodiester bonds at apurinic or apyrimidinic (AP) sites, generating a 3'-hydroxyl group and a 5'-terminal sugar phosphate. This chain is Probable endonuclease 4, found in Chlorobium phaeovibrioides (strain DSM 265 / 1930) (Prosthecochloris vibrioformis (strain DSM 265)).